The sequence spans 78 residues: MNRTKIVLGAVVLASTLLAGCSSTAKVDQLTSDIQTLNAKVDQLSNDVNAVHTDVQAAKDDAARANQRLDNQVRSYKK.

The first 20 residues, 1 to 20, serve as a signal peptide directing secretion; that stretch reads MNRTKIVLGAVVLASTLLAG. A lipid anchor (N-palmitoyl cysteine) is attached at Cys-21. The S-diacylglycerol cysteine moiety is linked to residue Cys-21. 2 repeats span residues 24–34 and 38–48; these read TAKVDQLTSDI and NAKVDQLSNDV. Positions 27–75 form a coiled coil; sequence VDQLTSDIQTLNAKVDQLSNDVNAVHTDVQAAKDDAARANQRLDNQVRS. At Lys-78 the chain carries N6-murein peptidoglycan lysine.

It belongs to the Lpp family. In terms of assembly, homotrimer.

The protein localises to the cell outer membrane. Its subcellular location is the secreted. The protein resides in the cell wall. Its function is as follows. A highly abundant outer membrane lipoprotein that controls the distance between the inner and outer membranes. The only protein known to be covalently linked to the peptidoglycan network (PGN). Also non-covalently binds the PGN. The link between the cell outer membrane and PGN contributes to maintenance of the structural and functional integrity of the cell envelope, and maintains the correct distance between the PGN and the outer membrane. The chain is Major outer membrane lipoprotein Lpp from Photorhabdus laumondii subsp. laumondii (strain DSM 15139 / CIP 105565 / TT01) (Photorhabdus luminescens subsp. laumondii).